A 568-amino-acid polypeptide reads, in one-letter code: 2-succinyl-5-enolpyruvyl-6-hydroxy-3-cyclohexene-1-carboxylate synthase (568 aa).

Belongs to the TPP enzyme family. MenD subfamily. In terms of assembly, homodimer. Mg(2+) is required as a cofactor. Mn(2+) serves as cofactor. It depends on thiamine diphosphate as a cofactor.

It catalyses the reaction isochorismate + 2-oxoglutarate + H(+) = 5-enolpyruvoyl-6-hydroxy-2-succinyl-cyclohex-3-ene-1-carboxylate + CO2. The protein operates within quinol/quinone metabolism; 1,4-dihydroxy-2-naphthoate biosynthesis; 1,4-dihydroxy-2-naphthoate from chorismate: step 2/7. Its pathway is quinol/quinone metabolism; menaquinone biosynthesis. Its function is as follows. Catalyzes the thiamine diphosphate-dependent decarboxylation of 2-oxoglutarate and the subsequent addition of the resulting succinic semialdehyde-thiamine pyrophosphate anion to isochorismate to yield 2-succinyl-5-enolpyruvyl-6-hydroxy-3-cyclohexene-1-carboxylate (SEPHCHC). The polypeptide is 2-succinyl-5-enolpyruvyl-6-hydroxy-3-cyclohexene-1-carboxylate synthase (Mannheimia succiniciproducens (strain KCTC 0769BP / MBEL55E)).